Here is a 1044-residue protein sequence, read N- to C-terminus: Probable translation initiation factor IF-2 (1044 aa).

One can recognise a DOD-type homing endonuclease domain in the interval 173–265; the sequence is FAGTIFGREN…LSLILLRLGI (93 aa). Residues 451-668 enclose the tr-type G domain; it reads TTETHNFIAN…LIAGLSQKYL (218 aa). GTP is bound by residues 524–528 and 578–581; these read DTPGH and NKID.

Belongs to the TRAFAC class translation factor GTPase superfamily. Classic translation factor GTPase family. IF-2 subfamily. In terms of processing, this protein undergoes a protein self splicing that involves a post-translational excision of the intervening region (intein) followed by peptide ligation.

Functionally, function in general translation initiation by promoting the binding of the formylmethionine-tRNA to ribosomes. Seems to function along with eIF-2. The chain is Probable translation initiation factor IF-2 (infB) from Pyrococcus horikoshii (strain ATCC 700860 / DSM 12428 / JCM 9974 / NBRC 100139 / OT-3).